Here is a 280-residue protein sequence, read N- to C-terminus: Phosphatidylserine decarboxylase proenzyme (280 aa).

Catalysis depends on charge relay system; for autoendoproteolytic cleavage activity residues Asp88, His144, and Ser247. The Schiff-base intermediate with substrate; via pyruvic acid; for decarboxylase activity role is filled by Ser247. Residue Ser247 is modified to Pyruvic acid (Ser); by autocatalysis.

Belongs to the phosphatidylserine decarboxylase family. PSD-B subfamily. Prokaryotic type I sub-subfamily. In terms of assembly, heterodimer of a large membrane-associated beta subunit and a small pyruvoyl-containing alpha subunit. Pyruvate serves as cofactor. In terms of processing, is synthesized initially as an inactive proenzyme. Formation of the active enzyme involves a self-maturation process in which the active site pyruvoyl group is generated from an internal serine residue via an autocatalytic post-translational modification. Two non-identical subunits are generated from the proenzyme in this reaction, and the pyruvate is formed at the N-terminus of the alpha chain, which is derived from the carboxyl end of the proenzyme. The autoendoproteolytic cleavage occurs by a canonical serine protease mechanism, in which the side chain hydroxyl group of the serine supplies its oxygen atom to form the C-terminus of the beta chain, while the remainder of the serine residue undergoes an oxidative deamination to produce ammonia and the pyruvoyl prosthetic group on the alpha chain. During this reaction, the Ser that is part of the protease active site of the proenzyme becomes the pyruvoyl prosthetic group, which constitutes an essential element of the active site of the mature decarboxylase.

It localises to the cell membrane. It carries out the reaction a 1,2-diacyl-sn-glycero-3-phospho-L-serine + H(+) = a 1,2-diacyl-sn-glycero-3-phosphoethanolamine + CO2. The protein operates within phospholipid metabolism; phosphatidylethanolamine biosynthesis; phosphatidylethanolamine from CDP-diacylglycerol: step 2/2. In terms of biological role, catalyzes the formation of phosphatidylethanolamine (PtdEtn) from phosphatidylserine (PtdSer). The sequence is that of Phosphatidylserine decarboxylase proenzyme from Xanthomonas axonopodis pv. citri (strain 306).